Consider the following 1187-residue polypeptide: Myelin transcription factor 1-like protein (1187 aa).

Positions 1–20 (MDVDAEEKRHRTRSKGVRVP) are disordered. The segment at 22–65 (EPAIQELFSCPTPGCDGSGHVSGKYARHRSVYGCPLAKKRKTQD) adopts a CCHHC-type 1 zinc-finger fold. Zn(2+) contacts are provided by Cys-31, Cys-36, His-49, and Cys-55. 2 disordered regions span residues 56 to 178 (PLAK…QMSC) and 221 to 248 (RTES…GRKS). Acidic residues predominate over residues 89 to 172 (ECYESDGTED…EEEEEEEENE (84 aa)). Ser-251 is modified (phosphoserine). Disordered regions lie at residues 343 to 422 (SETN…DRSE) and 450 to 509 (REKM…PTPG). Polar residues predominate over residues 344 to 358 (ETNPQDRSQPPNMSV). Basic and acidic residues-rich tracts occupy residues 362-377 (VRQE…DRSY), 401-412 (AKEDGCHERDDD), and 450-504 (REKM…RESK). 2 consecutive CCHHC-type zinc fingers follow at residues 496 to 539 (SRTE…PPEI) and 540 to 583 (LAMH…KLAK). Zn(2+) contacts are provided by Cys-505, Cys-510, His-523, Cys-529, Cys-549, Cys-554, His-567, and Cys-573. Positions 684–708 (ASPSSSTTSSYAPSSSSNLSCGGGS) are disordered. CCHHC-type zinc fingers lie at residues 895 to 938 (LATS…GIRI), 944 to 987 (DKED…QKDG), and 997 to 1040 (KSVK…MKKA). Zn(2+)-binding residues include Cys-904, Cys-909, His-922, Cys-928, Cys-953, Cys-958, His-971, Cys-977, Cys-1006, Cys-1011, His-1024, and Cys-1030. The stretch at 1055–1131 (SNGIENDEEI…LANLSQSLIH (77 aa)) forms a coiled coil.

Belongs to the MYT1 family. As to quaternary structure, interacts with SIN3B. As to expression, brain, testis and pituitary gland. Expression is higher in the brain than in the testis and pituitary gland. Highest level expression seen in the developing CNS.

It is found in the nucleus. Its subcellular location is the chromosome. Functionally, transcription factor that plays a key role in neuronal differentiation. Acts by specifically repressing expression of non-neuronal genes during neuron differentiation. In contrast to other transcription repressors that inhibit specific lineages, mediates repression of multiple differentiation programs. Also represses expression of negative regulators of neurogenesis, such as members of the Notch signaling pathway, including HES1. The combination of three transcription factors, ASCL1, POU3F2/BRN2 and MYT1L, is sufficient to reprogram fibroblasts and other somatic cells into induced neuronal (iN) cells in vitro. Directly binds the 5'-AAGTT-3' core motif present on the promoter of target genes and represses transcription by recruiting a multiprotein complex containing SIN3B. The 5'-AAGTT-3' core motif is absent from the promoter of neural genes. The protein is Myelin transcription factor 1-like protein (Myt1l) of Rattus norvegicus (Rat).